A 427-amino-acid polypeptide reads, in one-letter code: Glutamate-1-semialdehyde 2,1-aminomutase (427 aa).

At Lys-265 the chain carries N6-(pyridoxal phosphate)lysine.

This sequence belongs to the class-III pyridoxal-phosphate-dependent aminotransferase family. HemL subfamily. As to quaternary structure, homodimer. Requires pyridoxal 5'-phosphate as cofactor.

It is found in the cytoplasm. The enzyme catalyses (S)-4-amino-5-oxopentanoate = 5-aminolevulinate. Its pathway is porphyrin-containing compound metabolism; protoporphyrin-IX biosynthesis; 5-aminolevulinate from L-glutamyl-tRNA(Glu): step 2/2. This Pseudomonas paraeruginosa (strain DSM 24068 / PA7) (Pseudomonas aeruginosa (strain PA7)) protein is Glutamate-1-semialdehyde 2,1-aminomutase.